We begin with the raw amino-acid sequence, 751 residues long: Dendritic arbor reduction protein 1 (751 aa).

Residues 57 to 89 (NNNNTSSNNNHSSNSSSNNSNGSQTPNGNNNSS) are compositionally biased toward low complexity. 6 disordered regions span residues 57–167 (NNNN…PNSN), 248–275 (LMLSSSGSSNNNGSSNSSSNTGESATSQ), 304–351 (TEKQ…QQHL), 374–410 (LQQQHQQQQHLQHNNSSSSSPKLATPGDNSGNTSSYQ), 458–578 (SATA…AATG), and 594–639 (SAIQ…AAHI). Residues 95 to 125 (HQHHQFHHHLHHHHSHQHHHQHHHLHQHHSH) are compositionally biased toward basic residues. Positions 153–167 (AQQQQLQPAGSPNSN) are enriched in polar residues. Composition is skewed to low complexity over residues 251 to 267 (SSSGSSNNNGSSNSSSN), 309 to 351 (RQQQ…QQHL), and 374 to 393 (LQQQHQQQQHLQHNNSSSSS). Polar residues predominate over residues 400-410 (GDNSGNTSSYQ). Low complexity-rich tracts occupy residues 458–513 (SATA…SSAS), 527–548 (DPGSPGSSMVAAAAAAAAQRRT), and 594–610 (SAIQQQQQQPQQQQVPQ). C2H2-type zinc fingers lie at residues 664–688 (HHCDFVGCSKVYTKSSHLKAHQRIH), 694–718 (YTCQWPECEWRFARSDELTRHYRKH), and 724–746 (FKCIVCERSFARSDHLALHMKRH).

Belongs to the krueppel C2H2-type zinc-finger protein family. As to expression, highly enriched in the peripheral nervous system but is absent from the central nervous system. Expressed in neurons with more than one dendrite including da neurons, bd neurons and the dmd1 neuron but undetectable in neurons with single dendrites such as external sensory organ neurons and chodonotal neurons.

It localises to the nucleus. Functionally, transcriptional regulator which promotes dendrite growth by suppressing, either directly or indirectly, the expression of the microtubule-severing protein spas. Determines multipolar neuron morphology in postmitotic neurons by positively regulating the expression of genes involved in nuclear positioning including several dynein genes and the nuclear migration protein nudC. The polypeptide is Dendritic arbor reduction protein 1 (Drosophila melanogaster (Fruit fly)).